The primary structure comprises 718 residues: Nucleolar protein 11 (718 aa).

Lysine 346 bears the N6-methyllysine mark.

In terms of assembly, interacts with UTP4. Interacts with FBL/fibrillarin in a transcription-dependent manner. May associate with the proposed t-UTP subcomplex of the SSU processome containing at least UTP4, WDR43, HEATR1, UTP15, WDR75.

The protein localises to the nucleus. Its subcellular location is the nucleolus. Ribosome biogenesis factor. May be required for both optimal rDNA transcription and small subunit (SSU) pre-rRNA processing at sites A', A0, 1 and 2b. The protein is Nucleolar protein 11 (NOL11) of Bos taurus (Bovine).